The chain runs to 291 residues: UPF0276 protein VV3194 (291 aa).

It belongs to the UPF0276 family.

The chain is UPF0276 protein VV3194 from Vibrio vulnificus (strain YJ016).